The chain runs to 259 residues: Global transcriptional regulator CodY (259 aa).

The segment at 1-155 is GAF domain; that stretch reads MDLLSRARKI…GATVVGMEIL (155 aa). A DNA-binding region (H-T-H motif) is located at residues 203–222; it reads ASKIADRVGITRSVIVNALR. A Phosphoserine modification is found at S215.

Belongs to the CodY family.

Its subcellular location is the cytoplasm. DNA-binding global transcriptional regulator which is involved in the adaptive response to starvation and acts by directly or indirectly controlling the expression of numerous genes in response to nutrient availability. During rapid exponential growth, CodY is highly active and represses genes whose products allow adaptation to nutrient depletion. The chain is Global transcriptional regulator CodY from Oceanobacillus iheyensis (strain DSM 14371 / CIP 107618 / JCM 11309 / KCTC 3954 / HTE831).